The sequence spans 232 residues: 7-cyano-7-deazaguanine synthase (232 aa).

8–18 (FSGGQDSTTCL) lines the ATP pocket. 4 residues coordinate Zn(2+): C189, C198, C201, and C204.

It belongs to the QueC family. Requires Zn(2+) as cofactor.

It catalyses the reaction 7-carboxy-7-deazaguanine + NH4(+) + ATP = 7-cyano-7-deazaguanine + ADP + phosphate + H2O + H(+). It participates in purine metabolism; 7-cyano-7-deazaguanine biosynthesis. Its function is as follows. Catalyzes the ATP-dependent conversion of 7-carboxy-7-deazaguanine (CDG) to 7-cyano-7-deazaguanine (preQ(0)). The protein is 7-cyano-7-deazaguanine synthase of Photorhabdus laumondii subsp. laumondii (strain DSM 15139 / CIP 105565 / TT01) (Photorhabdus luminescens subsp. laumondii).